The chain runs to 2170 residues: Brefeldin A-inhibited guanine nucleotide-exchange protein 3 (2170 aa).

Ser471 carries the phosphoserine modification. Disordered regions lie at residues 489-547 (EHTP…MGKV) and 613-634 (AAEKDSGRSDVSDIGSDNCSLA). Positions 503–524 (ISISVTTDTGQTTLEGELGQTT) are enriched in polar residues. One can recognise an SEC7 domain in the interval 579–792 (RTRSYGSRYS…EELYHQVLDR (214 aa)). The segment covering 614 to 623 (AEKDSGRSDV) has biased composition (basic and acidic residues). 3 positions are modified to phosphoserine: Ser628, Ser632, and Ser1045. A helical transmembrane segment spans residues 1488-1508 (PGFGIYAVVHLLLPVMSLWLL). Residues 1843 to 1872 (SSDSSQQCSSEDEDIFEETAQVSPPRGKEK) are disordered. Ser1881 carries the phosphoserine modification. The span at 1938 to 1955 (FQSESSTPSTGGFSGKNT) shows a compositional bias: polar residues. Disordered stretches follow at residues 1938-1997 (FQSE…RKKE) and 2024-2058 (KRRQPHNLPPFPKEVKVDKKGEPLGPRGPDSPLLQ). The span at 1956–1966 (PSEDDRREHLS) shows a compositional bias: basic and acidic residues. Phosphoserine is present on residues Ser1975 and Ser1984. Basic and acidic residues-rich tracts occupy residues 1986-1997 (KTEKKDPGRKKE) and 2036-2045 (KEVKVDKKGE). Ser2072, Ser2074, Ser2088, Ser2094, and Ser2096 each carry phosphoserine. Residues 2078–2097 (ELLRQEKRPRSGSTGSSLSV) form a disordered region. A compositionally biased stretch (low complexity) spans 2088-2097 (SGSTGSSLSV).

In terms of assembly, interacts with PHB2. Expressed in pancreatic islet (insulin granules of islet alpha and beta cells) and brain (at protein level).

The protein localises to the cytoplasmic vesicle. It localises to the secretory vesicle. The protein resides in the secretory vesicle membrane. Participates in the regulation of systemic glucose homeostasis, where it negatively regulates insulin granule biogenesis in pancreatic islet beta cells. Also regulates glucagon granule production in pancreatic alpha cells. Inhibits nuclear translocation of the transcriptional coregulator PHB2 and may enhance estrogen receptor alpha (ESR1) transcriptional activity in breast cancer cells. This Mus musculus (Mouse) protein is Brefeldin A-inhibited guanine nucleotide-exchange protein 3.